The following is a 476-amino-acid chain: Glycogen synthase (476 aa).

Lys15 contributes to the ADP-alpha-D-glucose binding site.

The protein belongs to the glycosyltransferase 1 family. Bacterial/plant glycogen synthase subfamily.

It catalyses the reaction [(1-&gt;4)-alpha-D-glucosyl](n) + ADP-alpha-D-glucose = [(1-&gt;4)-alpha-D-glucosyl](n+1) + ADP + H(+). It participates in glycan biosynthesis; glycogen biosynthesis. Synthesizes alpha-1,4-glucan chains using ADP-glucose. The chain is Glycogen synthase from Bacillus cereus (strain ATCC 14579 / DSM 31 / CCUG 7414 / JCM 2152 / NBRC 15305 / NCIMB 9373 / NCTC 2599 / NRRL B-3711).